Consider the following 132-residue polypeptide: Sirohydrochlorin cobaltochelatase (132 aa).

Residue histidine 10 is the Proton acceptor of the active site. Histidine 10 is a binding site for Co(2+). Substrate-binding positions include arginine 46 and 69 to 74 (ISYGLH). A Co(2+)-binding site is contributed by histidine 74.

Belongs to the CbiX family. CbiXS subfamily. As to quaternary structure, homotetramer; dimer of dimers.

It carries out the reaction Co-sirohydrochlorin + 2 H(+) = sirohydrochlorin + Co(2+). It participates in cofactor biosynthesis; adenosylcobalamin biosynthesis; cob(II)yrinate a,c-diamide from sirohydrochlorin (anaerobic route): step 1/10. Catalyzes the insertion of Co(2+) into sirohydrochlorin as part of the anaerobic pathway to cobalamin biosynthesis. In Archaeoglobus fulgidus (strain ATCC 49558 / DSM 4304 / JCM 9628 / NBRC 100126 / VC-16), this protein is Sirohydrochlorin cobaltochelatase.